A 288-amino-acid polypeptide reads, in one-letter code: Nucleotide-binding protein APP7_0339 (288 aa).

Glycine 8–serine 15 contributes to the ATP binding site. Aspartate 56 to asparagine 59 serves as a coordination point for GTP.

This sequence belongs to the RapZ-like family.

Functionally, displays ATPase and GTPase activities. This chain is Nucleotide-binding protein APP7_0339, found in Actinobacillus pleuropneumoniae serotype 7 (strain AP76).